We begin with the raw amino-acid sequence, 535 residues long: CTP synthase (535 aa).

Residues 1 to 267 (MTKYIFVTGG…DQIVCDHLKL (267 aa)) form an amidoligase domain region. Position 13 (S13) interacts with CTP. S13 is a UTP binding site. 14 to 19 (SLGKGI) is a binding site for ATP. L-glutamine is bound at residue Y54. D71 serves as a coordination point for ATP. Mg(2+) contacts are provided by D71 and E141. CTP is bound by residues 148–150 (DIE), 188–193 (KTKPTQ), and K224. UTP contacts are provided by residues 188–193 (KTKPTQ) and K224. 240–242 (RDA) contacts ATP. Residues 292 to 534 (KIALVGKYVE…VRASITNKES (243 aa)) enclose the Glutamine amidotransferase type-1 domain. L-glutamine is bound at residue G354. The Nucleophile; for glutamine hydrolysis role is filled by C381. L-glutamine-binding positions include 382–385 (LGMQ), E405, and R462. Active-site residues include H507 and E509.

The protein belongs to the CTP synthase family. As to quaternary structure, homotetramer.

The catalysed reaction is UTP + L-glutamine + ATP + H2O = CTP + L-glutamate + ADP + phosphate + 2 H(+). It carries out the reaction L-glutamine + H2O = L-glutamate + NH4(+). The enzyme catalyses UTP + NH4(+) + ATP = CTP + ADP + phosphate + 2 H(+). Its pathway is pyrimidine metabolism; CTP biosynthesis via de novo pathway; CTP from UDP: step 2/2. Allosterically activated by GTP, when glutamine is the substrate; GTP has no effect on the reaction when ammonia is the substrate. The allosteric effector GTP functions by stabilizing the protein conformation that binds the tetrahedral intermediate(s) formed during glutamine hydrolysis. Inhibited by the product CTP, via allosteric rather than competitive inhibition. Functionally, catalyzes the ATP-dependent amination of UTP to CTP with either L-glutamine or ammonia as the source of nitrogen. Regulates intracellular CTP levels through interactions with the four ribonucleotide triphosphates. The sequence is that of CTP synthase from Bacillus cereus (strain ATCC 14579 / DSM 31 / CCUG 7414 / JCM 2152 / NBRC 15305 / NCIMB 9373 / NCTC 2599 / NRRL B-3711).